Reading from the N-terminus, the 294-residue chain is Cell division control protein 2 homolog A (294 aa).

The region spanning 4–287 is the Protein kinase domain; that stretch reads YEKVEKIGEG…ARNALQHEYF (284 aa). Residues 10–18 and Lys33 contribute to the ATP site; that span reads IGEGTYGVV. Thr14 carries the post-translational modification Phosphothreonine. The residue at position 15 (Tyr15) is a Phosphotyrosine. The active-site Proton acceptor is Asp127. At Thr161 the chain carries Phosphothreonine; by CAK.

It belongs to the protein kinase superfamily. CMGC Ser/Thr protein kinase family. CDC2/CDKX subfamily.

The catalysed reaction is L-seryl-[protein] + ATP = O-phospho-L-seryl-[protein] + ADP + H(+). It carries out the reaction L-threonyl-[protein] + ATP = O-phospho-L-threonyl-[protein] + ADP + H(+). The enzyme catalyses [DNA-directed RNA polymerase] + ATP = phospho-[DNA-directed RNA polymerase] + ADP + H(+). With respect to regulation, phosphorylation at Thr-14 or Tyr-15 inactivates the enzyme, while phosphorylation at Thr-161 activates it. In terms of biological role, plays a key role in the control of the eukaryotic cell cycle. The sequence is that of Cell division control protein 2 homolog A (CDC2A) from Antirrhinum majus (Garden snapdragon).